Here is a 30-residue protein sequence, read N- to C-terminus: YGGFMKSWNERSQKPLLTLFKNVIIKDGQQ.

Y1 carries the post-translational modification N-acetyltyrosine.

The protein belongs to the POMC family.

It is found in the secreted. The protein is Beta-endorphin-2 of Oncorhynchus keta (Chum salmon).